A 382-amino-acid chain; its full sequence is Galactokinase (382 aa).

A substrate-binding site is contributed by 34-37 (EHTD). An ATP-binding site is contributed by 124 to 130 (GAGLSSS). Mg(2+) is bound by residues Ser130 and Glu162. Catalysis depends on Asp174, which acts as the Proton acceptor. Substrate is bound at residue Tyr223.

Belongs to the GHMP kinase family. GalK subfamily.

It is found in the cytoplasm. It carries out the reaction alpha-D-galactose + ATP = alpha-D-galactose 1-phosphate + ADP + H(+). Its pathway is carbohydrate metabolism; galactose metabolism. Functionally, catalyzes the transfer of the gamma-phosphate of ATP to D-galactose to form alpha-D-galactose-1-phosphate (Gal-1-P). This chain is Galactokinase, found in Salmonella typhi.